Consider the following 280-residue polypeptide: Putative pyruvate, phosphate dikinase regulatory protein (280 aa).

An ADP-binding site is contributed by 154–161 (GVSRTSKT).

This sequence belongs to the pyruvate, phosphate/water dikinase regulatory protein family. PDRP subfamily.

It carries out the reaction N(tele)-phospho-L-histidyl/L-threonyl-[pyruvate, phosphate dikinase] + ADP = N(tele)-phospho-L-histidyl/O-phospho-L-threonyl-[pyruvate, phosphate dikinase] + AMP + H(+). The catalysed reaction is N(tele)-phospho-L-histidyl/O-phospho-L-threonyl-[pyruvate, phosphate dikinase] + phosphate + H(+) = N(tele)-phospho-L-histidyl/L-threonyl-[pyruvate, phosphate dikinase] + diphosphate. In terms of biological role, bifunctional serine/threonine kinase and phosphorylase involved in the regulation of the pyruvate, phosphate dikinase (PPDK) by catalyzing its phosphorylation/dephosphorylation. The protein is Putative pyruvate, phosphate dikinase regulatory protein of Nitrobacter winogradskyi (strain ATCC 25391 / DSM 10237 / CIP 104748 / NCIMB 11846 / Nb-255).